A 1418-amino-acid polypeptide reads, in one-letter code: JmjC domain-containing histone demethylation protein 1 (1418 aa).

3 disordered regions span residues 1–86, 102–162, and 308–329; these read MIGA…SSST, APLS…STFD, and GADR…SDEN. A compositionally biased stretch (basic and acidic residues) spans 44-60; the sequence is WIDRGDSQAASYDRDRV. A compositionally biased stretch (polar residues) spans 61-71; it reads TSNNDVYSSTN. Positions 127-139 are enriched in basic and acidic residues; sequence STERPAKRPRSEK. Residues 143–162 are compositionally biased toward polar residues; sequence PLHQPQTTVAPDANPSSTFD. Residues 308-321 are compositionally biased toward basic and acidic residues; sequence GADRASLDVPPRGD. The PHD-type zinc finger occupies 331 to 391; it reads QANCAACNLV…KFICRRCRPI (61 aa). The JmjC domain maps to 588–746; it reads VSQSKLGKLI…MQIKVAKIEK (159 aa). A substrate-binding site is contributed by threonine 639. Positions 642 and 644 each coordinate Fe cation. Residue lysine 659 participates in substrate binding. Histidine 714 provides a ligand contact to Fe cation. 4 disordered regions span residues 891–964, 1090–1118, 1130–1195, and 1250–1394; these read PQWT…TVEI, NAAT…CDDC, YGRI…HTQR, and KPTA…DEPD. Positions 907 to 925 are enriched in basic and acidic residues; it reads LTEKKPAGRPSRRSERNAE. 2 stretches are compositionally biased toward basic and acidic residues: residues 1130–1143 and 1186–1195; these read YGRI…ERSK and AEGDMSHTQR. Over residues 1250 to 1263 the composition is skewed to polar residues; the sequence is KPTASLVSPPTSQA. Low complexity predominate over residues 1341 to 1352; sequence SSKKPASRPSSS.

This sequence belongs to the JHDM1 histone demethylase family. Requires Fe(2+) as cofactor.

Its subcellular location is the nucleus. It carries out the reaction N(6),N(6)-dimethyl-L-lysyl(36)-[histone H3] + 2 2-oxoglutarate + 2 O2 = L-lysyl(36)-[histone H3] + 2 formaldehyde + 2 succinate + 2 CO2. Functionally, histone demethylase that specifically demethylates 'Lys-36' of histone H3, thereby playing a central role in histone code. In Aspergillus fumigatus (strain ATCC MYA-4609 / CBS 101355 / FGSC A1100 / Af293) (Neosartorya fumigata), this protein is JmjC domain-containing histone demethylation protein 1 (jhd1).